The following is a 100-amino-acid chain: NADH-quinone oxidoreductase subunit K 1 (100 aa).

3 helical membrane passes run 3 to 23 (IIKA…LGVI), 28 to 48 (LITV…ALVA), and 60 to 80 (IFAF…LGLI).

The protein belongs to the complex I subunit 4L family. In terms of assembly, NDH-1 is composed of 14 different subunits. Subunits NuoA, H, J, K, L, M, N constitute the membrane sector of the complex.

It localises to the cell inner membrane. The enzyme catalyses a quinone + NADH + 5 H(+)(in) = a quinol + NAD(+) + 4 H(+)(out). Functionally, NDH-1 shuttles electrons from NADH, via FMN and iron-sulfur (Fe-S) centers, to quinones in the respiratory chain. The immediate electron acceptor for the enzyme in this species is believed to be ubiquinone. Couples the redox reaction to proton translocation (for every two electrons transferred, four hydrogen ions are translocated across the cytoplasmic membrane), and thus conserves the redox energy in a proton gradient. The chain is NADH-quinone oxidoreductase subunit K 1 from Aquifex aeolicus (strain VF5).